Here is a 275-residue protein sequence, read N- to C-terminus: MERLAPAKVNLGLSVRFRREDGYHELHTLFAPFSLADRLVVEPVSSGLHFQGPYGRENLAYRAASLYLEAAGQPGGVRILLEKRIPEGAGLGGGSSDAAQVLLALQALYPAEVDLFALARTLGADVPFFLLGRGAEARGVGERLKPLALPPVPAVVFFPGLRVPTPLVYRAVRPEDFGPDLPVEAILEALARGEEPPYWNSLEGPAFRLFPELKEVRGRMRALGLRGVLMSGSGSAFFGLAEGPDHARRAAEALRAWGRAWAGTLGGGDAGSGPA.

Residue Lys8 is part of the active site. 86–96 (PEGAGLGGGSS) is an ATP binding site. Asp125 is a catalytic residue.

This sequence belongs to the GHMP kinase family. IspE subfamily.

It catalyses the reaction 4-CDP-2-C-methyl-D-erythritol + ATP = 4-CDP-2-C-methyl-D-erythritol 2-phosphate + ADP + H(+). Its pathway is isoprenoid biosynthesis; isopentenyl diphosphate biosynthesis via DXP pathway; isopentenyl diphosphate from 1-deoxy-D-xylulose 5-phosphate: step 3/6. Catalyzes the phosphorylation of the position 2 hydroxy group of 4-diphosphocytidyl-2C-methyl-D-erythritol. This is 4-diphosphocytidyl-2-C-methyl-D-erythritol kinase from Thermus thermophilus (strain ATCC BAA-163 / DSM 7039 / HB27).